Consider the following 519-residue polypeptide: Fatty acid--[acyl-carrier-protein] ligase ScoC (519 aa).

Thr-167 lines the Mg(2+) pocket. Residues Ile-216 and Thr-312 each contribute to the ATP site. A Mg(2+)-binding site is contributed by Glu-313. 2 residues coordinate ATP: Asp-394 and Lys-411.

It belongs to the ATP-dependent AMP-binding enzyme family. Mg(2+) is required as a cofactor.

The enzyme catalyses a medium-chain fatty acid + holo-[ACP] + ATP = a medium-chain fatty acyl-[ACP] + AMP + diphosphate. The catalysed reaction is a medium-chain fatty acid + ATP + H(+) = a medium-chain fatty acyl-AMP + diphosphate. It carries out the reaction a medium-chain fatty acyl-AMP + holo-[ACP] = a medium-chain fatty acyl-[ACP] + AMP + H(+). It catalyses the reaction octanoate + holo-[ACP] + ATP = octanoyl-[ACP] + AMP + diphosphate. The enzyme catalyses octanoate + ATP + H(+) = octanoyl-AMP + diphosphate. The catalysed reaction is octanoyl-AMP + holo-[ACP] = octanoyl-[ACP] + AMP + H(+). It carries out the reaction a (2E)-enoyl fatty acid + holo-[ACP] + ATP = a (2E)-enoyl-[ACP] + AMP + diphosphate. It catalyses the reaction a (2E)-enoyl fatty acid + ATP + H(+) = a (2E)-2-fatty-enoyl-AMP + diphosphate. The enzyme catalyses a (2E)-2-fatty-enoyl-AMP + holo-[ACP] = a (2E)-enoyl-[ACP] + AMP + H(+). The catalysed reaction is (2E)-2-butenoate + holo-[ACP] + ATP = (2E)-butenoyl-[ACP] + AMP + diphosphate. It carries out the reaction (2E)-2-butenoate + ATP + H(+) = (2E)-but-2-enoyl-AMP + diphosphate. It catalyses the reaction (2E)-but-2-enoyl-AMP + holo-[ACP] = (2E)-butenoyl-[ACP] + AMP + H(+). The enzyme catalyses a (3R)-3-isocyanyl-fatty acid + holo-[ACP] + ATP = a (3R)-3-isocyanyl-fatty acyl-[ACP] + AMP + diphosphate. The catalysed reaction is a (3R)-3-isocyanyl-fatty acid + ATP + H(+) = a (3R)-3-isocyanyl-fatty acyl-AMP + diphosphate. It carries out the reaction a (3R)-3-isocyanyl-fatty acyl-AMP + holo-[ACP] = a (3R)-3-isocyanyl-fatty acyl-[ACP] + AMP + H(+). It catalyses the reaction (3R)-3-isocyanylbutanoate + holo-[ACP] + ATP = (3R)-3-isocyanylbutanoyl-[ACP] + AMP + diphosphate. The enzyme catalyses (3R)-3-isocyanylbutanoate + ATP + H(+) = (3R)-3-isocyanylbutanoyl-AMP + diphosphate. The catalysed reaction is (3R)-3-isocyanylbutanoyl-AMP + holo-[ACP] = (3R)-3-isocyanylbutanoyl-[ACP] + AMP + H(+). In terms of biological role, acyl:acyl-carrier protein ligase involved in the biosynthesis of a unique class of isonitrile lipopeptides (INLPs). Shows a strong preference for fatty acids with a short/medium-chain length (C4-C8) in vitro, and accepts alpha,beta-unsaturated fatty acids such as crotonate, which seems to be a physiological substrate. Acts twice during the INLP pathway, catalyzing the activation of crotonate ((2E)-2-butenoate) as well as (3R)-3-isocyanylbutanoate as acyl-adenylates (acyl-AMP), and then the acyl transfer to the dedicated acyl-carrier protein ScoB. The chain is Fatty acid--[acyl-carrier-protein] ligase ScoC from Streptomyces coeruleorubidus.